The primary structure comprises 715 residues: Myosin light chain kinase 3 (715 aa).

Residues 67–114 (VTLPNDPSSQHSPEAHTGASEPLKPVSAGESSKALQKAKEISVKSSEP) are disordered. The region spanning 404 to 659 (VNPVEVLGGG…ASGCMKHSWL (256 aa)) is the Protein kinase domain. ATP-binding positions include 410-418 (LGGGRFGQV) and Lys433. Catalysis depends on Asp525, which acts as the Proton acceptor.

The protein belongs to the protein kinase superfamily. CAMK Ser/Thr protein kinase family. It depends on Mg(2+) as a cofactor. Phosphorylated on serine residues.

Its subcellular location is the cytoplasm. The enzyme catalyses L-seryl-[myosin light chain] + ATP = O-phospho-L-seryl-[myosin light chain] + ADP + H(+). The catalysed reaction is L-threonyl-[myosin light chain] + ATP = O-phospho-L-threonyl-[myosin light chain] + ADP + H(+). Kinase that phosphorylates MYL2 in vitro. Increases cardiomyocyte contractility. Required for sarcomere formation in the developing heart. This Danio rerio (Zebrafish) protein is Myosin light chain kinase 3 (mylk3).